A 264-amino-acid chain; its full sequence is Proteasome subunit beta type-4 (264 aa).

M1 carries the N-acetylmethionine modification. Residues 1-45 (MEAFLGSRSGLWAGGPAPGQFYRIPSTPDSFMDPASALYRGPITR) constitute a propeptide that is removed on maturation. S26 is subject to Phosphoserine. The residue at position 102 (Y102) is a Phosphotyrosine.

This sequence belongs to the peptidase T1B family. The 26S proteasome consists of a 20S proteasome core and two 19S regulatory subunits. The 20S proteasome core is a barrel-shaped complex made of 28 subunits that are arranged in four stacked rings. The two outer rings are each formed by seven alpha subunits, and the two inner rings are formed by seven beta subunits. The proteolytic activity is exerted by three beta-subunits PSMB5, PSMB6 and PSMB7. Forms a ternary complex with SMAD1 and OAZ1 before PSMB4 is incorporated into the 20S proteasome. Interacts with PRPF19. In terms of assembly, (Microbial infection) Interacts with HTLV-1 Tax protein. As to quaternary structure, (Microbial infection) Interacts with HIV-1 Nef and Tat proteins.

The protein resides in the cytoplasm. It is found in the nucleus. In terms of biological role, non-catalytic component of the 20S core proteasome complex involved in the proteolytic degradation of most intracellular proteins. This complex plays numerous essential roles within the cell by associating with different regulatory particles. Associated with two 19S regulatory particles, forms the 26S proteasome and thus participates in the ATP-dependent degradation of ubiquitinated proteins. The 26S proteasome plays a key role in the maintenance of protein homeostasis by removing misfolded or damaged proteins that could impair cellular functions, and by removing proteins whose functions are no longer required. Associated with the PA200 or PA28, the 20S proteasome mediates ubiquitin-independent protein degradation. This type of proteolysis is required in several pathways including spermatogenesis (20S-PA200 complex) or generation of a subset of MHC class I-presented antigenic peptides (20S-PA28 complex). SMAD1/OAZ1/PSMB4 complex mediates the degradation of the CREBBP/EP300 repressor SNIP1. In Homo sapiens (Human), this protein is Proteasome subunit beta type-4.